The following is a 546-amino-acid chain: Chaperonin GroEL (546 aa).

ATP-binding positions include 29–32, lysine 50, 86–90, glycine 414, and aspartate 492; these read TMGP and DGTTT.

Belongs to the chaperonin (HSP60) family. As to quaternary structure, forms a cylinder of 14 subunits composed of two heptameric rings stacked back-to-back. Interacts with the co-chaperonin GroES.

The protein localises to the cytoplasm. It catalyses the reaction ATP + H2O + a folded polypeptide = ADP + phosphate + an unfolded polypeptide.. Functionally, together with its co-chaperonin GroES, plays an essential role in assisting protein folding. The GroEL-GroES system forms a nano-cage that allows encapsulation of the non-native substrate proteins and provides a physical environment optimized to promote and accelerate protein folding. This chain is Chaperonin GroEL, found in Helicobacter pylori (strain G27).